The following is a 509-amino-acid chain: Maturase K (509 aa).

This sequence belongs to the intron maturase 2 family. MatK subfamily.

It localises to the plastid. Its subcellular location is the chloroplast. Functionally, usually encoded in the trnK tRNA gene intron. Probably assists in splicing its own and other chloroplast group II introns. The sequence is that of Maturase K from Opuntia quimilo (Cactus).